Here is a 260-residue protein sequence, read N- to C-terminus: Segregation and condensation protein A (260 aa).

The protein belongs to the ScpA family. As to quaternary structure, component of a cohesin-like complex composed of ScpA, ScpB and the Smc homodimer, in which ScpA and ScpB bind to the head domain of Smc. The presence of the three proteins is required for the association of the complex with DNA.

The protein resides in the cytoplasm. Its function is as follows. Participates in chromosomal partition during cell division. May act via the formation of a condensin-like complex containing Smc and ScpB that pull DNA away from mid-cell into both cell halves. This chain is Segregation and condensation protein A, found in Halalkalibacterium halodurans (strain ATCC BAA-125 / DSM 18197 / FERM 7344 / JCM 9153 / C-125) (Bacillus halodurans).